The following is a 212-amino-acid chain: Thymidylate kinase (212 aa).

11 to 18 (GPEGAGKT) serves as a coordination point for ATP.

The protein belongs to the thymidylate kinase family.

It catalyses the reaction dTMP + ATP = dTDP + ADP. Functionally, phosphorylation of dTMP to form dTDP in both de novo and salvage pathways of dTTP synthesis. The chain is Thymidylate kinase from Streptococcus pneumoniae (strain CGSP14).